The following is a 332-amino-acid chain: MTGQHADIAPATGPRIVVLVGGVGGARFLQGVRELLPDAEVSAIVNVGDDVWMHGLRICPDLDTCMYTLGGGIDTERGWGRVGETWHAKEELAAYHAKPDWFGLGDRDLATHLIRTEMLRAGYPLSAVTEALCNRWQPGVKLIPATDDRCETHVVVTDPENPGERRAIHFQEWWVRYRANVETHGFATIGADEAKPAPNVIDLIESADAVLLAPSNPVVSIGAILAVPGIRGALRTTRAKVIGVSGVIDGKPLRGMADECLSVIGVETTAEAVGRHYGARSATGILDGWLIHTTDTAEVPGVEVRSVPLLMTDPPTTAEIVREALDLAGVKW.

Aspartate 63 contributes to the 7,8-didemethyl-8-hydroxy-5-deazariboflavin binding site.

The protein belongs to the CofD family. In terms of assembly, homodimer. Mg(2+) serves as cofactor.

The enzyme catalyses enolpyruvoyl-2-diphospho-5'-guanosine + 7,8-didemethyl-8-hydroxy-5-deazariboflavin = dehydro coenzyme F420-0 + GMP + H(+). It participates in cofactor biosynthesis; coenzyme F420 biosynthesis. Catalyzes the transfer of the phosphoenolpyruvate moiety from enoylpyruvoyl-2-diphospho-5'-guanosine (EPPG) to 7,8-didemethyl-8-hydroxy-5-deazariboflavin (FO) with the formation of dehydro coenzyme F420-0 and GMP. This Nocardia farcinica (strain IFM 10152) protein is Phosphoenolpyruvate transferase.